Here is a 167-residue protein sequence, read N- to C-terminus: SsrA-binding protein (167 aa).

It belongs to the SmpB family.

Its subcellular location is the cytoplasm. In terms of biological role, required for rescue of stalled ribosomes mediated by trans-translation. Binds to transfer-messenger RNA (tmRNA), required for stable association of tmRNA with ribosomes. tmRNA and SmpB together mimic tRNA shape, replacing the anticodon stem-loop with SmpB. tmRNA is encoded by the ssrA gene; the 2 termini fold to resemble tRNA(Ala) and it encodes a 'tag peptide', a short internal open reading frame. During trans-translation Ala-aminoacylated tmRNA acts like a tRNA, entering the A-site of stalled ribosomes, displacing the stalled mRNA. The ribosome then switches to translate the ORF on the tmRNA; the nascent peptide is terminated with the 'tag peptide' encoded by the tmRNA and targeted for degradation. The ribosome is freed to recommence translation, which seems to be the essential function of trans-translation. The polypeptide is SsrA-binding protein (Stenotrophomonas maltophilia (strain K279a)).